A 379-amino-acid chain; its full sequence is MKNEMLALILAGGQGTRLGKLTQSIAKPAVQFGGRYRIIDFALSNCANSGINNVGVITQYQPLELNTHIGNGSSWGLDGIDSGVTVLQPYSATEGNRWFQGTSHAIYQNIDYIDRINPEYVLILSGDHIYKMDYDDMLQTHKDNLASLTVAVLDVPLKEASRFGIMNTDSNDRIVEFEEKPEHPKSTKASMGIYIFDWKRLRTVLIDGEKNGIDMSDFGKNVIPAYLESGERVYTYNFDGYWKDVGTIESLWEANMEYIGEDNKLHSRDRSWKIYSKNLIAPPNFMTEDANVKDSLVVDGCFVAGNVEHSILSTNVQVKPNAIIKDSFVMSGATIGEGAKINRAIIGEDAVIGDGVVIDGSKEVEVIGYKEVVGVPNED.

Alpha-D-glucose 1-phosphate-binding positions include G164, 179-180 (EK), and S190.

The protein belongs to the bacterial/plant glucose-1-phosphate adenylyltransferase family. As to quaternary structure, homotetramer.

It catalyses the reaction alpha-D-glucose 1-phosphate + ATP + H(+) = ADP-alpha-D-glucose + diphosphate. It participates in glycan biosynthesis; glycogen biosynthesis. Functionally, involved in the biosynthesis of ADP-glucose, a building block required for the elongation reactions to produce glycogen. Catalyzes the reaction between ATP and alpha-D-glucose 1-phosphate (G1P) to produce pyrophosphate and ADP-Glc. The polypeptide is Glucose-1-phosphate adenylyltransferase (Streptococcus agalactiae serotype III (strain NEM316)).